The sequence spans 186 residues: RNA polymerase sigma factor NccH (186 aa).

Residues Asp49–Leu62 carry the Polymerase core binding motif. Positions His152–Ala171 form a DNA-binding region, H-T-H motif.

It belongs to the sigma-70 factor family. ECF subfamily.

Sigma factors are initiation factors that promote the attachment of RNA polymerase to specific initiation sites and are then released. This sigma factor regulates the genes for a membrane-located efflux system that confers resistance to nickel, cobalt and cadmium. The sequence is that of RNA polymerase sigma factor NccH (nccH) from Alcaligenes xylosoxydans xylosoxydans (Achromobacter xylosoxidans).